We begin with the raw amino-acid sequence, 249 residues long: Glutathione S-transferase S1 (249 aa).

Residues 1–38 (MADEAQAPPAEGAPPAEGEAPPPAEGAEGAVEGGEAAP) are compositionally biased toward low complexity. The segment at 1 to 42 (MADEAQAPPAEGAPPAEGEAPPPAEGAEGAVEGGEAAPPAEP) is disordered. A GST N-terminal domain is found at 48-125 (HSYTLFYFNV…FLAKTVGLCG (78 aa)). Residues Tyr-54, Trp-85, Lys-89, 96 to 97 (QM), and 109 to 110 (QS) contribute to the glutathione site. Residues 127–249 (TPWEDLQIDI…WIEKRPVTEV (123 aa)) form the GST C-terminal domain.

Belongs to the GST superfamily. Sigma family. As to quaternary structure, homodimer.

It catalyses the reaction RX + glutathione = an S-substituted glutathione + a halide anion + H(+). Functionally, conjugation of reduced glutathione to a wide number of exogenous and endogenous hydrophobic electrophiles. May be involved in the detoxification of metabolites produced during cellular division and morphogenesis. This is Glutathione S-transferase S1 from Drosophila melanogaster (Fruit fly).